The following is a 51-amino-acid chain: Insulin (51 aa).

Disulfide bonds link cysteine 7–cysteine 37, cysteine 19–cysteine 50, and cysteine 36–cysteine 41.

It belongs to the insulin family. As to quaternary structure, heterodimer of a B chain and an A chain linked by two disulfide bonds.

It localises to the secreted. Insulin decreases blood glucose concentration. It increases cell permeability to monosaccharides, amino acids and fatty acids. It accelerates glycolysis, the pentose phosphate cycle, and glycogen synthesis in liver. In Balaenoptera physalus (Fin whale), this protein is Insulin (INS).